The chain runs to 104 residues: Transcription elongation factor A protein-like 9 (104 aa).

Basic and acidic residues predominate over residues 1 to 27 (MKSCQKMEGKPENESEPKHEEEPKPEE). Positions 1 to 44 (MKSCQKMEGKPENESEPKHEEEPKPEEKPEEEEKLEEEAKAKGT) are disordered.

It belongs to the TFS-II family. TFA subfamily.

The protein resides in the nucleus. In terms of biological role, may be involved in transcriptional regulation. This Homo sapiens (Human) protein is Transcription elongation factor A protein-like 9.